The following is a 306-amino-acid chain: UDP-3-O-acyl-N-acetylglucosamine deacetylase (306 aa).

The Zn(2+) site is built by H79, H238, and D242. H265 (proton donor) is an active-site residue.

The protein belongs to the LpxC family. Zn(2+) is required as a cofactor.

The catalysed reaction is a UDP-3-O-[(3R)-3-hydroxyacyl]-N-acetyl-alpha-D-glucosamine + H2O = a UDP-3-O-[(3R)-3-hydroxyacyl]-alpha-D-glucosamine + acetate. It participates in glycolipid biosynthesis; lipid IV(A) biosynthesis; lipid IV(A) from (3R)-3-hydroxytetradecanoyl-[acyl-carrier-protein] and UDP-N-acetyl-alpha-D-glucosamine: step 2/6. Its function is as follows. Catalyzes the hydrolysis of UDP-3-O-myristoyl-N-acetylglucosamine to form UDP-3-O-myristoylglucosamine and acetate, the committed step in lipid A biosynthesis. The chain is UDP-3-O-acyl-N-acetylglucosamine deacetylase from Shewanella denitrificans (strain OS217 / ATCC BAA-1090 / DSM 15013).